The sequence spans 124 residues: RNA polymerase-binding protein RbpA (124 aa).

Positions 34, 38, 56, and 59 each coordinate Zn(2+). Residues 73 to 124 (EKKAKPARTHWDMLMERRTREELEEVLEERLAVLRSGAMNIAVHPRDSRKSA) are sufficient for interaction with HrdB (SigA).

This sequence belongs to the RNA polymerase-binding protein RbpA family. As to quaternary structure, homodimer. Forms a complex with the RNAP, and a complex with RNAP plus principal sigma factor HrdB associated with promoter. Binds to free principal sigma factors HrdB and HrdA, probably via the sigma-2 domain, but not to 6 other sigma factors tested. The cofactor is Zn(2+).

Functionally, binds to RNA polymerase (RNAP), stimulating transcription from principal, but not alternative sigma factor promoters. Stimulates transcription from several principal sigma factor HrdB (SigA)-dependent promoters but not from a SigR-dependent promoter. Stimulation occurs in the presence of the transcription initiation inhibitor rifampicin (Rif). The chain is RNA polymerase-binding protein RbpA from Streptomyces coelicolor (strain ATCC BAA-471 / A3(2) / M145).